The chain runs to 150 residues: Large ribosomal subunit protein bL9 (150 aa).

It belongs to the bacterial ribosomal protein bL9 family.

Its function is as follows. Binds to the 23S rRNA. The protein is Large ribosomal subunit protein bL9 of Colwellia psychrerythraea (strain 34H / ATCC BAA-681) (Vibrio psychroerythus).